The following is a 293-amino-acid chain: MTENNDIKMVIITGMSGAGKTVALQSFEDLGYFCVDNLPPMLLPKFIELMADSKGKMNKVALGIDLRGREFFEHLWEALDDLSERTWIIPHILFLDAKDSTLVTRYKETRRSHPLAPTGLPLKGIEAERNLLTDMKARANIVLDTSDLKPKELREKIVHLFSTETEQAFRVNVMSFGFKYGIPIDADLVFDVRFLPNPYYIPHMKPLTGLDEEVSSYVLKFNETHKFLEKLTDLITFMLPHYKREGKSQLVIAIGCTGGQHRSVTLTEYLGKHLKPEYSVHVSHRDVEKRKGH.

An ATP-binding site is contributed by 14–21 (GMSGAGKT). 65 to 68 (DLRG) serves as a coordination point for GTP.

This sequence belongs to the RapZ-like family.

In terms of biological role, displays ATPase and GTPase activities. The sequence is that of Nucleotide-binding protein BCQ_4976 from Bacillus cereus (strain Q1).